The following is a 475-amino-acid chain: Aspartyl/glutamyl-tRNA(Asn/Gln) amidotransferase subunit B (475 aa).

It belongs to the GatB/GatE family. GatB subfamily. In terms of assembly, heterotrimer of A, B and C subunits.

The enzyme catalyses L-glutamyl-tRNA(Gln) + L-glutamine + ATP + H2O = L-glutaminyl-tRNA(Gln) + L-glutamate + ADP + phosphate + H(+). It catalyses the reaction L-aspartyl-tRNA(Asn) + L-glutamine + ATP + H2O = L-asparaginyl-tRNA(Asn) + L-glutamate + ADP + phosphate + 2 H(+). In terms of biological role, allows the formation of correctly charged Asn-tRNA(Asn) or Gln-tRNA(Gln) through the transamidation of misacylated Asp-tRNA(Asn) or Glu-tRNA(Gln) in organisms which lack either or both of asparaginyl-tRNA or glutaminyl-tRNA synthetases. The reaction takes place in the presence of glutamine and ATP through an activated phospho-Asp-tRNA(Asn) or phospho-Glu-tRNA(Gln). This chain is Aspartyl/glutamyl-tRNA(Asn/Gln) amidotransferase subunit B, found in Trichlorobacter lovleyi (strain ATCC BAA-1151 / DSM 17278 / SZ) (Geobacter lovleyi).